Reading from the N-terminus, the 106-residue chain is MATFELYRRSTIGMCLTETLDEMVQSGTLSPELAIQVLVQFDKSMTEALESQVKTKVSIKGHLHTYRFCDNVWTFILQDAMFKSDDRQENVSRVKIVACDSKLLTQ.

It belongs to the TFIIA subunit 2 family. In terms of assembly, TFIIA is a heterodimer of the large unprocessed subunit 1 and a small subunit gamma. It was originally believed to be a heterotrimer of an alpha, a beta and a gamma subunit.

The protein localises to the nucleus. Functionally, TFIIA is a component of the transcription machinery of RNA polymerase II and plays an important role in transcriptional activation. TFIIA in a complex with TBP mediates transcriptional activity. The chain is Transcription initiation factor IIA subunit 2 (TFIIA-S) from Arabidopsis thaliana (Mouse-ear cress).